Consider the following 438-residue polypeptide: Alkylcitrate synthase tstJ (438 aa).

Catalysis depends on residues histidine 309 and aspartate 365.

Belongs to the citrate synthase family.

It catalyses the reaction (2E,10E)-dode-2,10-dicenoyl-CoA + oxaloacetate + H2O = (4E,11E)-2-hydroxytrideca-4,11-dien-1,2,3-tricarboxylate + CoA + H(+). The protein operates within secondary metabolite biosynthesis. Its function is as follows. Alkylcitrate synthase; part of the gene cluster that mediates the biosynthesis of the antihypercholesterolemic agents phomoidrides which are dimeric anhydrides. Within the pathway, the alkylcitrate synthase (ACS) tstJ and the alkylcitrate dehydratase (ACDH) tstI produce the decarboxylated monomeric anhydrides by coupling the C12-fatty acyl product from phiA with oxalacetic acid. The pathway begins with the highly reducing polyketide synthase tstA that catalyzes the formation of a C12-fatty acyl-ACP, starting from one acetate and 5 malonate units. The hydrolase tstM is involved in the release of the C12-fatty acyl chain from phiA. The alkylcitrate synthase (ACS) tstJ and the alkylcitrate dehydratase (ACDH) tstI then give rise to decarboxylated monomeric anhydrides by coupling the C12-fatty acyl chain with oxalacetic acid. The cyclase tstC is responsible for the dimerization of the monomeric anhydrides which leads to the production of prephomoidride that contains the characteristic bicyclo[4.3.1]deca-1,6-diene system of phomoidrides. Iterative oxidation catalyzed by the alpha-ketoglutarate-dependent dioxygenase tstK produced then phomoidride A. Finally, the methyltransferase tstE converts phomoidride A to phomoidride B via an acetalization reaction. The phosphatidylethanolamine-binding protein tstB and tstN are not essential for dimerization and their functions have still to be determined. This chain is Alkylcitrate synthase tstJ, found in Talaromyces stipitatus (strain ATCC 10500 / CBS 375.48 / QM 6759 / NRRL 1006) (Penicillium stipitatum).